The sequence spans 84 residues: Cytochrome b559 subunit alpha (84 aa).

A helical transmembrane segment spans residues 22 to 36 (IIHSITIPALFVAGW). Residue H24 coordinates heme.

Belongs to the PsbE/PsbF family. In terms of assembly, heterodimer of an alpha subunit and a beta subunit. PSII is composed of 1 copy each of membrane proteins PsbA, PsbB, PsbC, PsbD, PsbE, PsbF, PsbH, PsbI, PsbJ, PsbK, PsbL, PsbM, PsbT, PsbX, PsbY, PsbZ, Psb30/Ycf12, at least 3 peripheral proteins of the oxygen-evolving complex and a large number of cofactors. It forms dimeric complexes. Heme b serves as cofactor.

The protein resides in the plastid. It localises to the chloroplast thylakoid membrane. Its function is as follows. This b-type cytochrome is tightly associated with the reaction center of photosystem II (PSII). PSII is a light-driven water:plastoquinone oxidoreductase that uses light energy to abstract electrons from H(2)O, generating O(2) and a proton gradient subsequently used for ATP formation. It consists of a core antenna complex that captures photons, and an electron transfer chain that converts photonic excitation into a charge separation. The polypeptide is Cytochrome b559 subunit alpha (Guillardia theta (Cryptophyte)).